The sequence spans 458 residues: Monomethylamine methyltransferase MtmB (458 aa).

Position 202 (O202) is a non-standard amino acid, pyrrolysine.

Belongs to the monomethylamine methyltransferase family. As to quaternary structure, can form a complex with MtmC.

It carries out the reaction Co(I)-[methylamine-specific corrinoid protein] + methylamine + H(+) = methyl-Co(III)-[methylamine-specific corrinoid protein] + NH4(+). Its pathway is one-carbon metabolism; methanogenesis from methylamine. In terms of biological role, catalyzes the transfer of the methyl group from monomethylamine to the corrinoid cofactor of MtmC. The sequence is that of Monomethylamine methyltransferase MtmB (mtmB1) from Methanosarcina mazei (strain ATCC BAA-159 / DSM 3647 / Goe1 / Go1 / JCM 11833 / OCM 88) (Methanosarcina frisia).